The primary structure comprises 349 residues: Green-sensitive opsin-1 (349 aa).

Residues 1–36 (MNGTEGSNFYIPMSNRTGLVRSPYDYTQYYLAEPWK) are Extracellular-facing. 2 N-linked (GlcNAc...) asparagine glycosylation sites follow: asparagine 2 and asparagine 15. A helical membrane pass occupies residues 37–61 (FKALAFYMFLLIIFGFPINVLTLVV). The Cytoplasmic segment spans residues 62 to 73 (TAQHKKLRQPLN). The helical transmembrane segment at 74–99 (YILVNLAFAGTIMVIFGFTVSFYCSL) threads the bilayer. At 100–113 (VGYMALGPLGCVME) the chain is on the extracellular side. Cysteine 110 and cysteine 187 form a disulfide bridge. Residues 114–133 (GFFATLGGQVALWSLVVLAI) form a helical membrane-spanning segment. Residues 134–152 (ERYIVVCKPMGSFKFSANH) lie on the Cytoplasmic side of the membrane. Residues 153–176 (AMAGIAFTWFMACSCAVPPLFGWS) traverse the membrane as a helical segment. Residues 177–202 (RYLPEGMQTSCGPDYYTLNPEYNNES) lie on the Extracellular side of the membrane. The N-linked (GlcNAc...) asparagine glycan is linked to asparagine 200. A helical transmembrane segment spans residues 203–230 (YVMYMFSCHFCIPVTTIFFTYGSLVCTV). Over 231 to 252 (KAAAAQQQESESTQKAEREVTR) the chain is Cytoplasmic. The chain crosses the membrane as a helical span at residues 253–276 (MVILMVLGFLFAWVPYASFAAWIF). The Extracellular portion of the chain corresponds to 277 to 284 (FNRGAAFS). The chain crosses the membrane as a helical span at residues 285–309 (AQAMAVPAFFSKTSAVFNPIIYVLL). Position 296 is an N6-(retinylidene)lysine (lysine 296). Residues 310 to 349 (NKQFRSCMLNTLFCGKSPLGDDESSSVSTSKTEVSSVSPA) lie on the Cytoplasmic side of the membrane. The interval 328–349 (LGDDESSSVSTSKTEVSSVSPA) is disordered. Positions 334 to 349 (SSVSTSKTEVSSVSPA) are enriched in low complexity.

This sequence belongs to the G-protein coupled receptor 1 family. Opsin subfamily. Phosphorylated on some or all of the serine and threonine residues present in the C-terminal region. As to expression, retinal double cone accessory photoreceptor cell outer segments.

The protein resides in the membrane. Functionally, visual pigments are the light-absorbing molecules that mediate vision. They consist of an apoprotein, opsin, covalently linked to cis-retinal. The polypeptide is Green-sensitive opsin-1 (opn1mw1) (Danio rerio (Zebrafish)).